Here is a 411-residue protein sequence, read N- to C-terminus: Probable UDP-arabinose 4-epimerase 3 (411 aa).

Over residues 1–13 the composition is skewed to polar residues; the sequence is MLSFSRARSQGRN. Residues 1 to 22 form a disordered region; that stretch reads MLSFSRARSQGRNTRPLGGGME. The Cytoplasmic segment spans residues 1–31; the sequence is MLSFSRARSQGRNTRPLGGGMEYLEPKRKSN. Residues 32 to 50 form a helical; Signal-anchor for type II membrane protein membrane-spanning segment; sequence VMGKIILVVSLTALCIFML. Over 51 to 411 the chain is Lumenal; that stretch reads KHAPSFTSPT…KTHPHGYASS (361 aa). NAD(+) is bound at residue 71 to 102; it reads HVLVTGGAGYIGSHAALRLLKDSYRVTIVDNL. The Proton acceptor role is filled by Y219.

This sequence belongs to the NAD(P)-dependent epimerase/dehydratase family. The cofactor is NAD(+).

The protein localises to the golgi apparatus. The protein resides in the golgi stack membrane. The enzyme catalyses UDP-beta-L-arabinopyranose = UDP-alpha-D-xylose. It participates in nucleotide-sugar biosynthesis; UDP-L-arabinose biosynthesis; UDP-L-arabinose from UDP-alpha-D-xylose: step 1/1. It functions in the pathway cell wall biogenesis; cell wall polysaccharide biosynthesis. This is Probable UDP-arabinose 4-epimerase 3 from Arabidopsis thaliana (Mouse-ear cress).